The chain runs to 864 residues: Leucine--tRNA ligase (864 aa).

Positions 42–52 (PYPSGKLHMGH) match the 'HIGH' region motif. The 'KMSKS' region signature appears at 624-628 (KMSKS). Residue K627 coordinates ATP.

Belongs to the class-I aminoacyl-tRNA synthetase family.

It localises to the cytoplasm. The catalysed reaction is tRNA(Leu) + L-leucine + ATP = L-leucyl-tRNA(Leu) + AMP + diphosphate. This is Leucine--tRNA ligase from Burkholderia ambifaria (strain MC40-6).